A 40-amino-acid polypeptide reads, in one-letter code: Thioredoxin (40 aa).

An intrachain disulfide couples Cys29 to Cys32.

The protein belongs to the thioredoxin family.

Participates in various redox reactions through the reversible oxidation of its active center dithiol to a disulfide and catalyzes dithiol-disulfide exchange reactions. The polypeptide is Thioredoxin (trxA) (Clostridium sporogenes).